The chain runs to 698 residues: MSADYSSEKFKATHLFDEILWHFRSNLSLKTNRRGLATAENSFSGKEAVDFLMIEMPRIIPNNVPERDKMQKFLEFMMDMNVISEAFPKKVKQRRPFSESRIYLFMKTLDELKHPKPRSRRSASFSGARKSAKVAQPASPAATMHRPPKARLPRRLSRSNGNIDKAGIDNSSGGVENHGFDDHKDDEIPKKQRTPKILNRSLESICTEEYTEKREVSEMKEKVYDWLPFFKSRRNHTKVNQPTRRSASLDRNHCVLEQEKAEAALRSQKVTTPPIREAPKDVVFMHPQGPLPAVPSRYQNHRTSIAGSNPALLSRGRMYESIMRRSSVVPVADSVQANNECSFWKTELLGRLEQIYDRTLPCEWASKVDGYDIQWNMIEIDHADGIVKSRCQGLQPDYPQTVIQFMDYLVRYPFVTHKKMDTGLEYNVNRIFITLVNRLEDLNAPLQFDECSLIVNLLCKIDSFAAMLDNGPARRWSKVMISSSASSIEEAGLMVDGFSRDLPACGIRASKYRRRALSPFDNRVNLEIQDEKSYEIREQWLIEAIQLVLLSLPTSRRRKLHKFVTFIQSIETNAVFDLADPSNGSSNNREAAIIGLWTGVCSKCRKQQGMLITAVLLANFQSLFAVPVEFIEQVKRLECEEKDRYSGPRYAKITRSRNDWQPPVPDKPQASPAVFKKPLREVACEKTKKGLFTRLLRK.

Residues 23–107 form the DEP domain; that stretch reads FRSNLSLKTN…SESRIYLFMK (85 aa). 2 disordered regions span residues 115–188 and 653–672; these read PKPR…DDEI and ITRS…QASP. A compositionally biased stretch (basic residues) spans 146 to 157; the sequence is RPPKARLPRRLS. The span at 178 to 188 shows a compositional bias: basic and acidic residues; that stretch reads HGFDDHKDDEI.

It is found in the cytoplasm. Its subcellular location is the cell cortex. In terms of biological role, required for the proper orientation of spindles after the establishment of polarity. May play a role in interactions between the astral microtubules and the cortical cytoskeleton. Required for asymmetric forces on nuclei and spindles. Acts downstream of the PAR signaling as an intermediate that transduces polarity information to the machinery that positions the mitotic spindle, possibly by regulating force generation. Regulates gpr-1/2 asymmetric cortical localization during the first embryonic cell divisions. Acts antagonistically to the gpr-1/2 signaling pathway. Regulates mes-1 expression and/or localization pattern during early embryogenesis. The protein is Protein let-99 (let-99) of Caenorhabditis elegans.